Reading from the N-terminus, the 156-residue chain is C-type lectin lectoxin-Phi2 (156 aa).

An N-terminal signal peptide occupies residues 1–23; that stretch reads MGRFIFVSLGLLVLAFSLSGIGA. Disulfide bonds link Cys27/Cys38, Cys55/Cys154, and Cys129/Cys146. A C-type lectin domain is found at 34–155; the sequence is HNVSCYKLIN…CNRRHRFLCK (122 aa). 2 N-linked (GlcNAc...) asparagine glycosylation sites follow: Asn35 and Asn109. The short motif at 119-121 is the Mannose-binding element; that stretch reads EPN. Glu127, Asn142, and Asp143 together coordinate Ca(2+).

This sequence belongs to the true venom lectin family. As to expression, expressed by the venom gland.

The protein localises to the secreted. Functionally, mannose-binding lectin which recognizes specific carbohydrate structures and agglutinates a variety of animal cells by binding to cell-surface glycoproteins and glycolipids. May be a calcium-dependent lectin. This Philodryas olfersii (Green snake) protein is C-type lectin lectoxin-Phi2.